The following is a 521-amino-acid chain: MSDTEDLAALNDRLMAKNHALAEALSRAGKELTKAKSQLAQLAQPPLTFATMVKVDSTRTDEDGIQHASAEVISGTRRMVVPVASNVNAARLTAGATVMLNEKLVLVEQRDADTVGQIRSVKQVLDDGRLIVTDASGNPVLIRRSGALAYAGINQGDRIIVDPSVRLAIEALPAEGDKDLVLEETPDVTFADIGGLDSEIGRIRDAVQLPFQHRALFERYDLKPPKGVLLYGPPGNGKTMIAKAVANALCEGGYDTNGDGSISPAETHVKGVFLSVKGPELLNKYVGESERLIRLIFQRARERAADGNPVVVFIDEMDSLLRTRGSGVSSDVETTIVPQFLSELDGVESLDNVMVIGASNRVDMIDPAVLRPGRLDVKIRVGRPKTNQAIAIVDHYLTDDLPLEDGVDAHALSAVLVHDIYGTSERRHLCDVQEENGQWHALFLADVVSGAMLKNIVDRAKTRAVKESIETGLDVALTVPLLAAAVEDEYRETRDSMADVDPEQWSRINGMDPIRRIRTAE.

Positions 4–44 (TEDLAALNDRLMAKNHALAEALSRAGKELTKAKSQLAQLAQ) form a coiled coil. Residue 235–240 (GNGKTM) coordinates ATP.

The protein belongs to the AAA ATPase family. In terms of assembly, homohexamer. Assembles into a hexameric ring structure.

The polypeptide is AAA ATPase forming ring-shaped complexes (Bifidobacterium longum (strain NCC 2705)).